We begin with the raw amino-acid sequence, 308 residues long: Tetraspanin-12 (308 aa).

Over Met1–Ser41 the chain is Cytoplasmic. Residues Val42 to Trp62 traverse the membrane as a helical segment. Residues Ala63–Trp86 are Extracellular-facing. Residues Pro87 to Leu107 traverse the membrane as a helical segment. Residues Arg108–Ser112 lie on the Cytoplasmic side of the membrane. A helical transmembrane segment spans residues Phe113–Val133. Over Phe134–Asn268 the chain is Extracellular. Residue Asn213 is glycosylated (N-linked (GlcNAc...) asparagine). The helical transmembrane segment at Met269–Phe289 threads the bilayer. The Cytoplasmic segment spans residues Ala290–His308.

Belongs to the tetraspanin (TM4SF) family. May interact with protease sup-17; the interaction promotes sup-17 cell membrane localization. In terms of tissue distribution, expressed in the germline.

It localises to the cell membrane. The protein resides in the cytoplasmic vesicle membrane. It is found in the endosome membrane. Its subcellular location is the early endosome membrane. The protein localises to the late endosome membrane. It localises to the recycling endosome membrane. The protein resides in the golgi apparatus. It is found in the trans-Golgi network membrane. Its function is as follows. Functions redundantly with tsp-14 isoform a to regulate body size, embryonic and vulva development. Functions redundantly with tsp-14 (isoforms a and b) to regulate cell fate specification in the postembryonic mesodermal M lineage and male development. May regulate BMP-like Sma/Mab signaling by mediating protease sup-17 trafficking to the cell surface. Together with tsp-14, functions redundantly to maintain cell surface levels of the BMP type II receptor daf-4 (but not BMP type I receptor sma-6), probably by regulating endosomal sorting of receptors and their targeting to degradative lysosomes. Together with tsp-14 involved in maintaining the structural and functional integrity of the endosomal network. Together with tsp-14, probably acts by modulating the activation of glp-1, a Notch-like receptor, to regulate germline maturation. Probably acts by modulating the activation of lin-12, a Notch-like receptor, to regulate cell fate specification such as the anchor cell/ventral uterine precursor cell decision. The polypeptide is Tetraspanin-12 (Caenorhabditis elegans).